Here is a 153-residue protein sequence, read N- to C-terminus: NADH dehydrogenase [ubiquinone] 1 beta subcomplex subunit 11, mitochondrial (153 aa).

The transit peptide at Met1–Trp29 directs the protein to the mitochondrion. Residues Pro40 to Asp77 are disordered. Residues Leu66 to Asp77 are compositionally biased toward basic and acidic residues. A helical transmembrane segment spans residues Leu89–Leu109.

It belongs to the complex I NDUFB11 subunit family. In terms of assembly, complex I is composed of 45 different subunits. Interacts with BCAP31.

The protein localises to the mitochondrion inner membrane. Its function is as follows. Accessory subunit of the mitochondrial membrane respiratory chain NADH dehydrogenase (Complex I), that is believed not to be involved in catalysis. Complex I functions in the transfer of electrons from NADH to the respiratory chain. The immediate electron acceptor for the enzyme is believed to be ubiquinone. The chain is NADH dehydrogenase [ubiquinone] 1 beta subcomplex subunit 11, mitochondrial (NDUFB11) from Gorilla gorilla gorilla (Western lowland gorilla).